A 434-amino-acid polypeptide reads, in one-letter code: Methylenetetrahydrofolate--tRNA-(uracil-5-)-methyltransferase TrmFO (434 aa).

9–14 is a binding site for FAD; the sequence is GAGLAG.

Belongs to the MnmG family. TrmFO subfamily. FAD is required as a cofactor.

Its subcellular location is the cytoplasm. The catalysed reaction is uridine(54) in tRNA + (6R)-5,10-methylene-5,6,7,8-tetrahydrofolate + NADH + H(+) = 5-methyluridine(54) in tRNA + (6S)-5,6,7,8-tetrahydrofolate + NAD(+). The enzyme catalyses uridine(54) in tRNA + (6R)-5,10-methylene-5,6,7,8-tetrahydrofolate + NADPH + H(+) = 5-methyluridine(54) in tRNA + (6S)-5,6,7,8-tetrahydrofolate + NADP(+). Its function is as follows. Catalyzes the folate-dependent formation of 5-methyl-uridine at position 54 (M-5-U54) in all tRNAs. This is Methylenetetrahydrofolate--tRNA-(uracil-5-)-methyltransferase TrmFO from Listeria welshimeri serovar 6b (strain ATCC 35897 / DSM 20650 / CCUG 15529 / CIP 8149 / NCTC 11857 / SLCC 5334 / V8).